Here is a 225-residue protein sequence, read N- to C-terminus: MKIVVPVMPQNIEEANQLDLTRIDSTDIIEWRADYLVKDDILTVAPAIFEKFSGHEVIFTLRTEKEGGNISLSNEDYLAIIRDIAALYQPDYIDFEYFSYRDVLEEMYDFSNLILSYHNFEETPENLMEVFSELTALAPRVVKIAVMPKNEQDVLDLMNYTRGFKTLNPNQEYVTMSMSKLGRISRLAADLIGSSWTFASLEQESAPGQISLADMRKIKEVLDAN.

3-dehydroquinate-binding positions include 30–32 (EWR) and Arg-62. His-118 (proton donor/acceptor) is an active-site residue. Lys-143 serves as the catalytic Schiff-base intermediate with substrate. Positions 186, 205, and 209 each coordinate 3-dehydroquinate.

Belongs to the type-I 3-dehydroquinase family. As to quaternary structure, homodimer.

The catalysed reaction is 3-dehydroquinate = 3-dehydroshikimate + H2O. It participates in metabolic intermediate biosynthesis; chorismate biosynthesis; chorismate from D-erythrose 4-phosphate and phosphoenolpyruvate: step 3/7. Involved in the third step of the chorismate pathway, which leads to the biosynthesis of aromatic amino acids. Catalyzes the cis-dehydration of 3-dehydroquinate (DHQ) and introduces the first double bond of the aromatic ring to yield 3-dehydroshikimate. The protein is 3-dehydroquinate dehydratase of Streptococcus mutans serotype c (strain ATCC 700610 / UA159).